Here is a 268-residue protein sequence, read N- to C-terminus: Probable RNA methyltransferase C2A9.10 (268 aa).

Residues 23–258 form the Bin3-type SAM domain; that stretch reads DPRLKCLPDS…RTMYIYKKKG (236 aa).

This sequence belongs to the methyltransferase superfamily.

Its function is as follows. Probable RNA methyltransferase. The sequence is that of Probable RNA methyltransferase C2A9.10 from Schizosaccharomyces pombe (strain 972 / ATCC 24843) (Fission yeast).